The primary structure comprises 185 residues: Ribosome-recycling factor (185 aa).

The protein belongs to the RRF family.

It localises to the cytoplasm. Responsible for the release of ribosomes from messenger RNA at the termination of protein biosynthesis. May increase the efficiency of translation by recycling ribosomes from one round of translation to another. This chain is Ribosome-recycling factor, found in Campylobacter jejuni subsp. doylei (strain ATCC BAA-1458 / RM4099 / 269.97).